Here is a 93-residue protein sequence, read N- to C-terminus: MARVTVQEAADKIGNRFDLILTAARRARQLQLHAREPLVPEENDKPTVIALREIEKGLINGQIMDQLENNDAIQQEVAEQEAISFLADVQANA.

This sequence belongs to the RNA polymerase subunit omega family. The RNAP catalytic core consists of 2 alpha, 1 beta, 1 beta' and 1 omega subunit. When a sigma factor is associated with the core the holoenzyme is formed, which can initiate transcription.

The enzyme catalyses RNA(n) + a ribonucleoside 5'-triphosphate = RNA(n+1) + diphosphate. Functionally, promotes RNA polymerase assembly. Latches the N- and C-terminal regions of the beta' subunit thereby facilitating its interaction with the beta and alpha subunits. The sequence is that of DNA-directed RNA polymerase subunit omega from Actinobacillus pleuropneumoniae serotype 7 (strain AP76).